The sequence spans 344 residues: Dihydroorotate dehydrogenase (quinone) (344 aa).

Residues 64–68 (AGLDK) and T88 each bind FMN. K68 is a substrate binding site. 113 to 117 (NRMGF) provides a ligand contact to substrate. The FMN site is built by N144 and N177. N177 is a binding site for substrate. The active-site Nucleophile is S180. N182 provides a ligand contact to substrate. The FMN site is built by K222 and T250. Residue 251-252 (NT) participates in substrate binding. FMN-binding positions include G273, G302, and 323–324 (YS).

It belongs to the dihydroorotate dehydrogenase family. Type 2 subfamily. Monomer. Requires FMN as cofactor.

The protein localises to the cell membrane. It catalyses the reaction (S)-dihydroorotate + a quinone = orotate + a quinol. It functions in the pathway pyrimidine metabolism; UMP biosynthesis via de novo pathway; orotate from (S)-dihydroorotate (quinone route): step 1/1. Its function is as follows. Catalyzes the conversion of dihydroorotate to orotate with quinone as electron acceptor. This Polynucleobacter necessarius subsp. necessarius (strain STIR1) protein is Dihydroorotate dehydrogenase (quinone).